A 377-amino-acid chain; its full sequence is Chaperone protein DnaJ (377 aa).

The 66-residue stretch at 5 to 70 folds into the J domain; the sequence is DYYEVLEVSR…EKRTIYDRYG (66 aa). The CR-type zinc finger occupies 138-215; that stretch reads GCEKKIDITY…CQGKGYHEET (78 aa). The Zn(2+) site is built by C151, C154, C167, C170, C189, C192, C203, and C206. 4 CXXCXGXG motif repeats span residues 151-158, 167-174, 189-196, and 203-210; these read CEECGGTG, CDYCGGQG, CPKCHGEG, and CPSCQGKG.

The protein belongs to the DnaJ family. As to quaternary structure, homodimer. It depends on Zn(2+) as a cofactor.

The protein resides in the cytoplasm. In terms of biological role, participates actively in the response to hyperosmotic and heat shock by preventing the aggregation of stress-denatured proteins and by disaggregating proteins, also in an autonomous, DnaK-independent fashion. Unfolded proteins bind initially to DnaJ; upon interaction with the DnaJ-bound protein, DnaK hydrolyzes its bound ATP, resulting in the formation of a stable complex. GrpE releases ADP from DnaK; ATP binding to DnaK triggers the release of the substrate protein, thus completing the reaction cycle. Several rounds of ATP-dependent interactions between DnaJ, DnaK and GrpE are required for fully efficient folding. Also involved, together with DnaK and GrpE, in the DNA replication of plasmids through activation of initiation proteins. This Sulfurovum sp. (strain NBC37-1) protein is Chaperone protein DnaJ.